The following is a 241-amino-acid chain: MORN repeat-containing protein 3 (241 aa).

The tract at residues 6–35 is interaction with MDM2; the sequence is CPRKVEPPWKGWDRKAQKNGLRHQVFAVNG. MORN repeat units follow at residues 38–60, 62–84, 91–113, 114–136, 137–159, 160–182, and 184–205; these read YVGE…KSGA, YEGD…DPET, YSGW…PKEY, YEGE…NGDI, YEGQ…NGNR, YEGI…DHGQ, and FEGY…GRDE. The segment at 76 to 100 is interaction with SIRT1; the sequence is SLSHPDPETGKLRRVYSGWWKGDKK. An interaction with TP53 region spans residues 206–240; it reads APEPTQFPIPKVEILDPDGVLKEALDKLMKPEEEE.

Interacts with MEIG1. Interacts with TP53, MDM2 and SIRT1; the interactions mediate post-transcriptional modifications of TP53 by MDM2 and SIRT1. In terms of tissue distribution, expressed in testis (at protein level).

It is found in the cytoplasmic vesicle. It localises to the secretory vesicle. The protein resides in the acrosome. Functionally, assembles a suppression complex (suppresome) by tethering SIRT1 and MDM2 to regulate composite modifications of p53/TP53. Confers both deacetylation-mediated functional inactivation, by SIRT1, and ubiquitination-dependent degradation, by MDM2, of p53/TP53, promoting a proliferative and cell survival behaviors. May play a role in the regulation of spermatogenesis. The sequence is that of MORN repeat-containing protein 3 (Morn3) from Mus musculus (Mouse).